A 238-amino-acid polypeptide reads, in one-letter code: Ribonuclease PH (238 aa).

Phosphate is bound by residues Arg-86 and 124–126 (GTR).

Belongs to the RNase PH family. In terms of assembly, homohexameric ring arranged as a trimer of dimers.

It carries out the reaction tRNA(n+1) + phosphate = tRNA(n) + a ribonucleoside 5'-diphosphate. Its function is as follows. Phosphorolytic 3'-5' exoribonuclease that plays an important role in tRNA 3'-end maturation. Removes nucleotide residues following the 3'-CCA terminus of tRNAs; can also add nucleotides to the ends of RNA molecules by using nucleoside diphosphates as substrates, but this may not be physiologically important. Probably plays a role in initiation of 16S rRNA degradation (leading to ribosome degradation) during starvation. This is Ribonuclease PH from Histophilus somni (strain 2336) (Haemophilus somnus).